The sequence spans 553 residues: Putative transport protein YidE (553 aa).

5 helical membrane passes run 4–24 (IALT…IGNV), 28–48 (GIGL…HFVS), 65–85 (FGLI…FFAS), 95–115 (LFAV…HKLF), and 158–178 (MSYA…MWML). 2 RCK C-terminal domains span residues 191–276 (QQHE…VIGQ) and 279–361 (DTSL…VLGN). The next 6 helical transmembrane spans lie at 371-391 (MLPV…PVFV), 393-413 (GFPA…ALIL), 439-459 (IVLF…NTLV), 464-484 (LSWI…VGIL), 493-513 (YLTM…LAFA), and 533-553 (LVMF…WSIG).

It belongs to the AAE transporter (TC 2.A.81) family. YidE subfamily.

It localises to the cell membrane. The protein is Putative transport protein YidE of Shigella boydii serotype 4 (strain Sb227).